Reading from the N-terminus, the 115-residue chain is UPF0122 protein NT01CX_2214 (115 aa).

Belongs to the UPF0122 family.

In terms of biological role, might take part in the signal recognition particle (SRP) pathway. This is inferred from the conservation of its genetic proximity to ftsY/ffh. May be a regulatory protein. The protein is UPF0122 protein NT01CX_2214 of Clostridium novyi (strain NT).